Consider the following 410-residue polypeptide: Lipid droplet-regulating VLDL assembly factor AUP1 (410 aa).

At Met1 the chain carries N-acetylmethionine. Residues 1 to 20 (MELPSGPGPERLFDSHRLPG) are Cytoplasmic-facing. A Phosphoserine modification is found at Ser5. Residues 21 to 41 (DCFLLLVLLLYAPVGFCLLVL) lie within the membrane without spanning it. The Cytoplasmic portion of the chain corresponds to 42–410 (RLFLGIHVFL…FTERRAQEAD (369 aa)). The segment at 255–295 (TGTRLTPADKAEHMKRQRHPRLRPQSAQSSFPPSPGPSPDV) is disordered. Ser288 and Ser292 each carry phosphoserine. The 43-residue stretch at 296-338 (QLATLAQRVKEVLPHVPLGVIQRDLAKTGCVDLTITNLLEGAV) folds into the CUE domain. The tract at residues 350–369 (QSLPTASASKFPSSGPVTPQ) is disordered. Ser363 is modified (phosphoserine). Residue Thr367 is modified to Phosphothreonine.

The protein belongs to the AUP1 family. As to quaternary structure, identified in a complex that contains SEL1L, OS9, FAF2/UBXD8, UBE2J1/UBC6E and AUP1. Interacts with the cytoplasmic tail of ITGA2B, ITGA1, ITGA2, ITGA5, ITGAV and ITGAM. Interacts (via C-terminus) with ubiquitin-conjugating enzyme UBE2G2; the interaction recruits UBE2G2 to lipid droplets. Interacts with ubiquitin ligases AMFR/gp78 and RNF139/TRC8; this promotes interaction of UBE2G2 with AMFR and RNF139. Interacts with apolipoprotein APOB. In terms of assembly, (Microbial infection) Interacts with Dengue virus NS4A; the interaction occurs in the presence of Dengue virus NS4B and induces lipophagy which facilitates production of virus progeny. Post-translationally, monoubiquitinated and diubiquitinated. (Microbial infection) Not ubiquitinated following Dengue virus infection. Detected in blood platelets and leukocytes (at protein level). Ubiquitous. Highly expressed in placenta, liver, kidney, skeletal muscle, heart and brain.

Its subcellular location is the endoplasmic reticulum membrane. The protein resides in the lipid droplet. It localises to the cytoplasmic vesicle. It is found in the autophagosome. Plays a role in the translocation of terminally misfolded proteins from the endoplasmic reticulum lumen to the cytoplasm and their degradation by the proteasome. Plays a role in lipid droplet formation. Induces lipid droplet clustering. Recruits ubiquitin-conjugating enzyme UBE2G2 to lipid droplets which facilitates its interaction with ubiquitin ligases AMFR/gp78 and RNF139/TRC8, leading to sterol-induced ubiquitination of HMGCR and its subsequent proteasomal degradation. Also required for the degradation of INSIG1, SREBF1 and SREBF2. Plays a role in regulating assembly and secretion of very low density lipoprotein particles and stability of apolipoprotein APOB. In terms of biological role, (Microbial infection) Following Dengue virus infection, required for induction of lipophagy which facilitates production of virus progeny particles. This is Lipid droplet-regulating VLDL assembly factor AUP1 from Homo sapiens (Human).